A 92-amino-acid chain; its full sequence is Small ribosomal subunit protein uS19 (92 aa).

This sequence belongs to the universal ribosomal protein uS19 family.

Functionally, protein S19 forms a complex with S13 that binds strongly to the 16S ribosomal RNA. The polypeptide is Small ribosomal subunit protein uS19 (Wigglesworthia glossinidia brevipalpis).